A 369-amino-acid chain; its full sequence is ERCC4 domain-containing protein EP364R (369 aa).

In terms of domain architecture, ERCC4 spans 3 to 101 (FLVADHREHH…QLYFFVEGPA (99 aa)). The tract at residues 339–369 (PLHDVSDDASSDASSPTGHQTLSKEMSLNTA) is disordered. A compositionally biased stretch (polar residues) spans 354–369 (PTGHQTLSKEMSLNTA).

It belongs to the asfivirus EP364R family.

Functionally, plays a role in the inhibition of type I interferon signaling pathway. Mechanistically, specifically interacts with 2',3'-cGAMP and cleaves it via its phosphodiesterase activity. In turn, prevents 2',3'-cGAMP interaction with host ER-resident STING1 leading to inhibition of downstream signaling pathway and type I interferon production. In African swine fever virus (isolate Tick/South Africa/Pretoriuskop Pr4/1996) (ASFV), this protein is ERCC4 domain-containing protein EP364R.